Here is a 691-residue protein sequence, read N- to C-terminus: Elongation factor G (691 aa).

One can recognise a tr-type G domain in the interval 8–283 (DMQRNIGIMA…AVVDFLPSPV (276 aa)). GTP contacts are provided by residues 17-24 (AHIDAGKT), 81-85 (DTPGH), and 135-138 (NKMD).

Belongs to the TRAFAC class translation factor GTPase superfamily. Classic translation factor GTPase family. EF-G/EF-2 subfamily.

It localises to the cytoplasm. Catalyzes the GTP-dependent ribosomal translocation step during translation elongation. During this step, the ribosome changes from the pre-translocational (PRE) to the post-translocational (POST) state as the newly formed A-site-bound peptidyl-tRNA and P-site-bound deacylated tRNA move to the P and E sites, respectively. Catalyzes the coordinated movement of the two tRNA molecules, the mRNA and conformational changes in the ribosome. This Nitratidesulfovibrio vulgaris (strain ATCC 29579 / DSM 644 / CCUG 34227 / NCIMB 8303 / VKM B-1760 / Hildenborough) (Desulfovibrio vulgaris) protein is Elongation factor G.